Here is a 277-residue protein sequence, read N- to C-terminus: MRSPWADDVEYQKDPLFLNYEKRIWDNSTNQTTFSWHKDTREIASSSILALALVHDVWGPVIAACSIDARWAASDIYVIPTNSTVVFSNTTDSLMESLRHSNQGNREANIAKYGLSRNPIDIQLEWAEKLNRKYIFDLSVKPSQRMKAAPNEEINAIETFLMDIIPSMRVDPSVSTLLGLIVSDSISRTINTTRAPWGMVEEVDSNGSWNYSEVVRNSGNENRPNPDDDNGYVMRVIADRYGYGFALRVRFGVLYLESLPNGLVPIGDIFVLVWDLN.

The protein operates within secondary metabolite biosynthesis. Part of the gene cluster that mediates the biosynthesis of squalestatin S1 (SQS1, also known as zaragozic acid A), a heavily oxidized fungal polyketide that offers potent cholesterol lowering activity by targeting squalene synthase (SS). SQS1 is composed of a 2,8-dioxobicyclic[3.2.1]octane-3,4,5-tricarboxyclic acid core that is connected to two lipophilic polyketide arms. These initial steps feature the priming of an unusual benzoic acid starter unit onto the highly reducing polyketide synthase clz14, followed by oxaloacetate extension and product release to generate a tricarboxylic acid containing product. The phenylalanine ammonia lyase (PAL) clz10 and the acyl-CoA ligase clz12 are involved in transforming phenylalanine into benzoyl-CoA. The citrate synthase-like protein clz17 is involved in connecting the C-alpha-carbons of the hexaketide chain and oxaloacetate to afford the tricarboxylic acid unit. The potential hydrolytic enzymes, clz11 and clz13, are in close proximity to pks2 and may participate in product release. On the other side, the tetraketide arm is synthesized by a the squalestatin tetraketide synthase clz2 and enzymatically esterified to the core in the last biosynthetic step, by the acetyltransferase clz6. The biosynthesis of the tetraketide must involve 3 rounds of chain extension. After the first and second rounds methyl-transfer occurs, and in all rounds of extension the ketoreductase and dehydratase are active. The enoyl reductase and C-MeT of clz2 are not active in the final round of extension. The acetyltransferase clz6 appears to have a broad substrate selectivity for its acyl CoA substrate, allowing the in vitro synthesis of novel squalestatins. The biosynthesis of SQS1 requires several oxidative steps likely performed by oxidoreductases clz3, clz15 and clz16. Finally, in support of the identification of the cluster as being responsible for SQS1 production, the cluster contains a gene encoding a putative squalene synthase (SS) clz20, suggesting a likely mechanism for self-resistance. The sequence is that of Zaragozic acid A biosynthesis cluster protein 1 from Cochliobolus lunatus (Filamentous fungus).